We begin with the raw amino-acid sequence, 975 residues long: E3 ubiquitin-protein ligase BRE1A (975 aa).

Residues M1–T30 are disordered. Residue K21 is modified to N6-acetyllysine. S41 carries the phosphoserine modification. Residues T43–L90 adopt a coiled-coil conformation. The disordered stretch occupies residues K125–A155. Residues S136 and S138 each carry the phosphoserine modification. Residues N139–G151 show a composition bias toward basic and acidic residues. Coiled-coil stretches lie at residues E168–V375 and S429–K898. N6-acetyllysine occurs at positions 348 and 510. The disordered stretch occupies residues D507 to E622. S522 bears the Phosphoserine mark. Residues E527–S540 show a composition bias toward basic and acidic residues. Residues L543 to A552 show a composition bias toward low complexity. The segment covering N558–E622 has biased composition (basic and acidic residues). S562 is modified (phosphoserine). Residues C922–N961 form an RING-type zinc finger.

It belongs to the BRE1 family. In terms of assembly, component of the RNF20/40 complex (also known as BRE1 complex) probably composed of 2 copies of RNF20/BRE1A and 2 copies of RNF40/BRE1B. Interacts with UBE2E1/UBCH6. Interacts with p53/TP53 and WAC. Interacts with PAF1; the interaction mediates the association of the PAF1 and RNF20/40 complexes which is a prerequsite for recruitment of UBE2A/B. Interacts with isoform 1 and isoform 2 of PA2G4. Interacts with FBXL19. As to quaternary structure, (Microbial infection) Interacts with human herpesvirus 8 (KSHV) protein RTA/ORF50; this interaction targets the SMC5-SMC6 complex for proteasomal degradation. In terms of tissue distribution, expressed in the normal brain and also in malignant gliomas (at protein level).

Its subcellular location is the nucleus. The enzyme catalyses S-ubiquitinyl-[E2 ubiquitin-conjugating enzyme]-L-cysteine + [acceptor protein]-L-lysine = [E2 ubiquitin-conjugating enzyme]-L-cysteine + N(6)-ubiquitinyl-[acceptor protein]-L-lysine.. Its pathway is protein modification; protein ubiquitination. Functionally, component of the RNF20/40 E3 ubiquitin-protein ligase complex that mediates monoubiquitination of 'Lys-120' of histone H2B (H2BK120ub1). H2BK120ub1 gives a specific tag for epigenetic transcriptional activation and is also prerequisite for histone H3 'Lys-4' and 'Lys-79' methylation (H3K4me and H3K79me, respectively). It thereby plays a central role inb histone code and gene regulation. The RNF20/40 complex forms a H2B ubiquitin ligase complex in cooperation with the E2 enzyme UBE2A or UBE2B; reports about the cooperation with UBE2E1/UBCH are contradictory. Required for transcriptional activation of Hox genes. Recruited to the MDM2 promoter, probably by being recruited by p53/TP53, and thereby acts as a transcriptional coactivator. Mediates the polyubiquitination of isoform 2 of PA2G4 in cancer cells leading to its proteasome-mediated degradation. In terms of biological role, (Microbial infection) Promotes the human herpesvirus 8 (KSHV) lytic cycle by inducing the expression of lytic viral genes including the latency switch gene RTA/ORF50. The sequence is that of E3 ubiquitin-protein ligase BRE1A (RNF20) from Homo sapiens (Human).